The sequence spans 199 residues: NADH-ubiquinone oxidoreductase chain 6 (199 aa).

A run of 5 helical transmembrane segments spans residues 1-21 (MILFYVFVVLALVSGAMVIRA), 27-47 (SVLFLILVFCNTSGLLVLLGL), 49-69 (FFAMIFLVVYVGAIAVLFLFV), 87-107 (YLPVGGIIGLIFLLEIFLMVD), and 150-170 (FFLFLVSSLILLVALIGAIVL).

Belongs to the complex I subunit 6 family.

Its subcellular location is the mitochondrion membrane. It carries out the reaction a ubiquinone + NADH + 5 H(+)(in) = a ubiquinol + NAD(+) + 4 H(+)(out). Its function is as follows. Core subunit of the mitochondrial membrane respiratory chain NADH dehydrogenase (Complex I) that is believed to belong to the minimal assembly required for catalysis. Complex I functions in the transfer of electrons from NADH to the respiratory chain. The immediate electron acceptor for the enzyme is believed to be ubiquinone. The protein is NADH-ubiquinone oxidoreductase chain 6 (ND6) of Marchantia polymorpha (Common liverwort).